We begin with the raw amino-acid sequence, 359 residues long: MTAETAFSAAPLPPVEQRIDVLIVGAGPVGLFAAFEAGVLGLSCVLVDVLDRPGGQCTELYPEKPIYDIPALVSCTAQELVDRLLAQCAPFGYPILCGRRAETVETIEGEHGRRFRVTTSVGDVFDCAAVLITAGNGAFAPQRVALPEAAALEGRHLHYAVRDTARFAGKHVVVAGGGDSALDWALALRKTAARVTLVHRREGFRAADASVAGMRAAVAAGEMDFQVGMIGRLDSAPDGTLTGIALRQREGETRLPCDELIALYGLVSEPGPIASWDVEMRAGRIVVETTAYETSRAGVFAAGDIALYPNKQKLILSGFHEVAMALRRAYRYANPDKTLVHTHTSNDTNLQSRLHAAAE.

FAD-binding residues include Asp-48, Gln-56, Tyr-61, Ala-101, Phe-139, Asp-304, and Ser-345. Positions Val-340 to Glu-359 are disordered. Positions His-341–Ser-352 are enriched in polar residues.

The protein belongs to the ferredoxin--NADP reductase type 2 family. As to quaternary structure, homodimer. FAD serves as cofactor.

The catalysed reaction is 2 reduced [2Fe-2S]-[ferredoxin] + NADP(+) + H(+) = 2 oxidized [2Fe-2S]-[ferredoxin] + NADPH. The protein is Ferredoxin--NADP reductase of Ralstonia nicotianae (strain ATCC BAA-1114 / GMI1000) (Ralstonia solanacearum).